The chain runs to 155 residues: MLKKKKTEVYALGEHISMSADKARRVIDQIRGRSYEETLMILELMPYRACYPILKLVYSAAANASYNMGSNETNLVISKAEVNEGTTVKKLKPRARGRSFPIKRSTCHITIVMKDISLDDEYGEMSSLKKTRWKKKSTAMTYRDMYNSGGLWDKK.

It belongs to the universal ribosomal protein uL22 family. In terms of assembly, part of the 50S ribosomal subunit.

Its subcellular location is the plastid. It localises to the chloroplast. Functionally, this protein binds specifically to 23S rRNA. In terms of biological role, the globular domain of the protein is located near the polypeptide exit tunnel on the outside of the subunit, while an extended beta-hairpin is found that lines the wall of the exit tunnel in the center of the 70S ribosome. In Solanum tuberosum (Potato), this protein is Large ribosomal subunit protein uL22c (rpl22).